The primary structure comprises 36 residues: Pancreatic polypeptide (36 aa).

Y36 is modified (tyrosine amide).

It belongs to the NPY family.

It is found in the secreted. Hormone secreted by pancreatic cells that acts as a regulator of pancreatic and gastrointestinal functions probably by signaling through the G protein-coupled receptor NPY4R2. The polypeptide is Pancreatic polypeptide (PPY) (Oryctolagus cuniculus (Rabbit)).